Here is a 557-residue protein sequence, read N- to C-terminus: Arginine--tRNA ligase (557 aa).

Residues 132-142 (ANPTGNLHLGH) carry the 'HIGH' region motif.

The protein belongs to the class-I aminoacyl-tRNA synthetase family. Monomer.

The protein resides in the cytoplasm. The catalysed reaction is tRNA(Arg) + L-arginine + ATP = L-arginyl-tRNA(Arg) + AMP + diphosphate. In Geobacillus thermodenitrificans (strain NG80-2), this protein is Arginine--tRNA ligase.